The chain runs to 256 residues: Pimeloyl-[acyl-carrier protein] methyl ester esterase (256 aa).

The AB hydrolase-1 domain maps to 15–242 (HLVLLHGWGL…AAHAPFISHP (228 aa)). Substrate contacts are provided by residues tryptophan 22, 82–83 (SL), and 143–147 (FLALQ). Serine 82 serves as the catalytic Nucleophile. Catalysis depends on residues aspartate 207 and histidine 235. Histidine 235 provides a ligand contact to substrate.

Belongs to the AB hydrolase superfamily. Carboxylesterase BioH family. In terms of assembly, monomer.

Its subcellular location is the cytoplasm. It carries out the reaction 6-carboxyhexanoyl-[ACP] methyl ester + H2O = 6-carboxyhexanoyl-[ACP] + methanol + H(+). It functions in the pathway cofactor biosynthesis; biotin biosynthesis. Its function is as follows. The physiological role of BioH is to remove the methyl group introduced by BioC when the pimeloyl moiety is complete. It allows to synthesize pimeloyl-ACP via the fatty acid synthetic pathway through the hydrolysis of the ester bonds of pimeloyl-ACP esters. The protein is Pimeloyl-[acyl-carrier protein] methyl ester esterase of Escherichia coli O8 (strain IAI1).